Here is a 430-residue protein sequence, read N- to C-terminus: Ribosomal protein uS12 methylthiotransferase RimO (430 aa).

Residues 4–119 (LKINFISLGC…IPVLFDIKPK (116 aa)) enclose the MTTase N-terminal domain. [4Fe-4S] cluster-binding residues include C13, C49, C82, C141, C145, and C148. The 232-residue stretch at 127–358 (STPKHTAYLK…SALQENITEQ (232 aa)) folds into the Radical SAM core domain. The TRAM domain maps to 361 to 430 (KSLIGKELDI…DKYDVVGEAE (70 aa)).

Belongs to the methylthiotransferase family. RimO subfamily. [4Fe-4S] cluster serves as cofactor.

It is found in the cytoplasm. The enzyme catalyses L-aspartate(89)-[ribosomal protein uS12]-hydrogen + (sulfur carrier)-SH + AH2 + 2 S-adenosyl-L-methionine = 3-methylsulfanyl-L-aspartate(89)-[ribosomal protein uS12]-hydrogen + (sulfur carrier)-H + 5'-deoxyadenosine + L-methionine + A + S-adenosyl-L-homocysteine + 2 H(+). Catalyzes the methylthiolation of an aspartic acid residue of ribosomal protein uS12. The chain is Ribosomal protein uS12 methylthiotransferase RimO from Sulfurihydrogenibium sp. (strain YO3AOP1).